The following is a 174-amino-acid chain: Probable N-acetyltransferase Rv2775 (174 aa).

The 167-residue stretch at 6-172 (IRIRAAKPID…VGYRLYRSAP (167 aa)) folds into the N-acetyltransferase domain.

Belongs to the acetyltransferase family.

This chain is Probable N-acetyltransferase Rv2775, found in Mycobacterium tuberculosis (strain ATCC 25618 / H37Rv).